A 388-amino-acid polypeptide reads, in one-letter code: Cystathionine gamma-synthase (388 aa).

Residue Lys-208 is modified to N6-(pyridoxal phosphate)lysine.

This sequence belongs to the trans-sulfuration enzymes family. In terms of assembly, homotetramer. It depends on pyridoxal 5'-phosphate as a cofactor.

The protein localises to the cytoplasm. The enzyme catalyses O-succinyl-L-homoserine + L-cysteine = L,L-cystathionine + succinate + H(+). In terms of biological role, catalyzes the formation of L-cystathionine from O-succinyl-L-homoserine (OSHS) and L-cysteine, via a gamma-replacement reaction. In the absence of thiol, catalyzes gamma-elimination to form 2-oxobutanoate, succinate and ammonia. The sequence is that of Cystathionine gamma-synthase (metB) from Mycobacterium leprae (strain TN).